Consider the following 381-residue polypeptide: Glycerate 2-kinase (381 aa).

Belongs to the glycerate kinase type-1 family.

The enzyme catalyses (R)-glycerate + ATP = (2R)-2-phosphoglycerate + ADP + H(+). Catalyzes the transfer of the phosphate group from adenosine triphosphate (ATP) to (R)-glycerate to form (2R)-2-phosphoglycerate, an enzymatic step in (L)-glucarate/galactarate catabolic pathway. The sequence is that of Glycerate 2-kinase (garK) from Escherichia coli (strain K12).